The primary structure comprises 133 residues: Large ribosomal subunit protein uL16c (133 aa).

This sequence belongs to the universal ribosomal protein uL16 family. As to quaternary structure, part of the 50S ribosomal subunit.

The protein resides in the plastid. The sequence is that of Large ribosomal subunit protein uL16c from Euglena longa (Euglenophycean alga).